A 189-amino-acid chain; its full sequence is MKILEQRIKKDGRVLGKDVLKVDSFLNHQVDPELMQAMGEEFATIFSDEKIDKIVTVESSGIAPAVFAGLALHVPVVFARKNKSLTLPENVWTADVYSFTKQTTNHIMIDHRFLSAAENILIIDDFLANGQAVEGLLKIANDANANVVGVGVVIEKTFQKGRQILDERGVRVESLARIKGFENDEVIFL.

Residues leucine 20 and asparagine 27 each coordinate xanthine. 128–132 (ANGQA) provides a ligand contact to 5-phospho-alpha-D-ribose 1-diphosphate. Lysine 156 contributes to the xanthine binding site.

Belongs to the purine/pyrimidine phosphoribosyltransferase family. Xpt subfamily. Homodimer.

The protein localises to the cytoplasm. It catalyses the reaction XMP + diphosphate = xanthine + 5-phospho-alpha-D-ribose 1-diphosphate. It participates in purine metabolism; XMP biosynthesis via salvage pathway; XMP from xanthine: step 1/1. Functionally, converts the preformed base xanthine, a product of nucleic acid breakdown, to xanthosine 5'-monophosphate (XMP), so it can be reused for RNA or DNA synthesis. The polypeptide is Xanthine phosphoribosyltransferase (Leuconostoc mesenteroides subsp. mesenteroides (strain ATCC 8293 / DSM 20343 / BCRC 11652 / CCM 1803 / JCM 6124 / NCDO 523 / NBRC 100496 / NCIMB 8023 / NCTC 12954 / NRRL B-1118 / 37Y)).